Here is a 131-residue protein sequence, read N- to C-terminus: POU domain, class 3, transcription factor 3 (131 aa).

The POU-specific domain occupies 1–60 (FTQRRMKLGFTQADVGLALGTLYGNVFSQTTICRFEALQLSFKNMCKLKPLLNKWLEEAD). Residues 78–131 (KRKKRTSIEVSVKGALESHFLKCPKPSAQEITNLADSLQLEKEVVRVWFCNNLQ) constitute a DNA-binding region (homeobox).

Belongs to the POU transcription factor family. Class-3 subfamily. As to quaternary structure, homodimer. As to expression, brain.

The protein resides in the nucleus. Its function is as follows. Transcription factor that acts synergistically with SOX11 and SOX4. Plays a role in neuronal development. Is implicated in an enhancer activity at the embryonic met-mesencephalic junction; the enhancer element contains the octamer motif (5'-ATTTGCAT-3'). The protein is POU domain, class 3, transcription factor 3 (POU3F3) of Sus scrofa (Pig).